Consider the following 34-residue polypeptide: Photosystem II reaction center protein T (34 aa).

A helical transmembrane segment spans residues 3–23 (ALVYTFLLVSTLGIIFFAIFF).

Belongs to the PsbT family. PSII is composed of 1 copy each of membrane proteins PsbA, PsbB, PsbC, PsbD, PsbE, PsbF, PsbH, PsbI, PsbJ, PsbK, PsbL, PsbM, PsbT, PsbY, PsbZ, Psb30/Ycf12, at least 3 peripheral proteins of the oxygen-evolving complex and a large number of cofactors. It forms dimeric complexes.

It is found in the plastid. Its subcellular location is the chloroplast thylakoid membrane. Its function is as follows. Found at the monomer-monomer interface of the photosystem II (PS II) dimer, plays a role in assembly and dimerization of PSII. PSII is a light-driven water plastoquinone oxidoreductase, using light energy to abstract electrons from H(2)O, generating a proton gradient subsequently used for ATP formation. This chain is Photosystem II reaction center protein T, found in Solanum bulbocastanum (Wild potato).